Reading from the N-terminus, the 1674-residue chain is Kinesin-like protein KIF14 (1674 aa).

The segment at 1-391 is required for PRC1-binding; that stretch reads MSVHTSHSRH…TEPDSLKVEN (391 aa). Disordered stretches follow at residues 132 to 158 and 171 to 374; these read ETLNPVGGNPGSDSASQASRTEAKGVN and KDSN…PEEN. Polar residues-rich tracts occupy residues 142-151 and 202-214; these read GSDSASQASR and SRAPVGSQRQTEA. A Phosphoserine modification is found at Ser-257. Thr-262 is subject to Phosphothreonine. Basic and acidic residues predominate over residues 267 to 279; that stretch reads VLEHRWTPRHDPP. Positions 302–311 are enriched in polar residues; sequence TFRSASSESR. Residues 317-329 show a composition bias toward basic and acidic residues; that stretch reads VPEHRWTPRHDLP. Residues 391–772 are required for microtubule-binding with high affinity; sequence NSQVTVAVRV…AAQRSNRNID (382 aa). The 344-residue stretch at 393–736 folds into the Kinesin motor domain; it reads QVTVAVRVRP…LRYATQARLI (344 aa). 482 to 489 contacts ATP; sequence GQTGSGKS. Residues 743-826 are a coiled coil; it reads NEDMNAKLIR…QETKELQKAG (84 aa). The region spanning 860–911 is the FHA domain; it reads TTVGKHTPSSSHDIQLSGVLIADDHCTIRNFGGTVSIVPAGEAKTYVNGTHI. The tract at residues 936–1674 is required for CIT-binding; the sequence is PVEVQKGKKL…DCTPNRIQWV (739 aa). Positions 961–1110 form a coiled coil; the sequence is EFAKNELLTA…VQMLQENRGN (150 aa). Ser-973 and Ser-1326 each carry phosphoserine. The interval 1618-1674 is disordered; sequence GLSKPWESCSSNSKEEQCKSDRADCGKSGPRRACEPHGDATPAVSSGDCTPNRIQWV. A compositionally biased stretch (basic and acidic residues) spans 1630–1642; the sequence is SKEEQCKSDRADC. Residues 1660–1674 are compositionally biased toward polar residues; it reads AVSSGDCTPNRIQWV.

Belongs to the TRAFAC class myosin-kinesin ATPase superfamily. Kinesin family. As to quaternary structure, directly interacts with PRC1 within a complex also containing KIF4A, KIF20A and KIF23; targets to the central spindle. Directly interacts with CIT depending on the activation state of the kinase (stronger interaction with the kinase-dead form); targets to the midbody. Interacts with ARRB2; the interaction is detected in the nucleus upon OR1D2 stimulation. Interacts with AKT1; the interaction is detected in the plasma membrane upon INS stimulation and promotes AKT1 phosphorylation. Interacts with SVIL; at midbody during cytokinesis. Interacts with RADIL (via PDZ domain); recruits RADIL to the microtubule network restricting RADIL from interaction with activated RAP1A.

It is found in the nucleus. It localises to the cytoplasm. The protein resides in the cytoskeleton. The protein localises to the spindle. Its subcellular location is the midbody. In terms of biological role, microtubule motor protein that binds to microtubules with high affinity through each tubulin heterodimer and has an ATPase activity. Plays a role in many processes like cell division, cytokinesis and also in cell proliferation and apoptosis. During cytokinesis, targets to central spindle and midbody through its interaction with PRC1 and CIT respectively. Regulates cell growth through regulation of cell cycle progression and cytokinesis. During cell cycle progression acts through SCF-dependent proteasomal ubiquitin-dependent protein catabolic process which controls CDKN1B degradation, resulting in positive regulation of cyclins, including CCNE1, CCND1 and CCNB1. During late neurogenesis, regulates the cerebellar and cerebral cortex development and olfactory bulb development through regulation of apoptosis, cell proliferation and cell division. Also is required for chromosome congression and alignment during mitotic cell cycle process. Regulates cell spreading, focal adhesion dynamics, and cell migration through its interaction with RADIL resulting in regulation of RAP1A-mediated inside-out integrin activation by tethering RADIL on microtubules. This Mus musculus (Mouse) protein is Kinesin-like protein KIF14.